Consider the following 126-residue polypeptide: Prefoldin subunit beta (126 aa).

Belongs to the prefoldin subunit beta family. Heterohexamer of two alpha and four beta subunits.

The protein localises to the cytoplasm. In terms of biological role, molecular chaperone capable of stabilizing a range of proteins. Seems to fulfill an ATP-independent, HSP70-like function in archaeal de novo protein folding. The protein is Prefoldin subunit beta (pfdB) of Pyrobaculum aerophilum (strain ATCC 51768 / DSM 7523 / JCM 9630 / CIP 104966 / NBRC 100827 / IM2).